The chain runs to 576 residues: Interleukin-1 receptor type 1 (576 aa).

An N-terminal signal peptide occupies residues 1 to 19 (MENMKVLLGFICLIVPLLS). Ig-like C2-type domains lie at 20–115 (LETD…ITMS), 121–217 (PGLC…RVIT), and 229–331 (PVIM…VRLV). The Extracellular portion of the chain corresponds to 20 to 338 (LETDKCTEYP…RLVYPVPDFK (319 aa)). 3 cysteine pairs are disulfide-bonded: Cys-25–Cys-107, Cys-46–Cys-99, and Cys-145–Cys-199. 2 N-linked (GlcNAc...) asparagine glycosylation sites follow: Asn-63 and Asn-103. Asn-236, Asn-252, and Asn-266 each carry an N-linked (GlcNAc...) asparagine glycan. An intrachain disulfide couples Cys-251 to Cys-315. The helical transmembrane segment at 339–359 (NYLIGGFAIFTATAVFCACIY) threads the bilayer. At 360 to 576 (KVFKVDIVLW…LQAETHLPLG (217 aa)) the chain is on the cytoplasmic side. In terms of domain architecture, TIR spans 386–541 (RTYDAYVLYP…RFWKNLRYQM (156 aa)). Glu-473 is an active-site residue. Tyr-499 is subject to Phosphotyrosine. Thr-556 carries the post-translational modification Phosphothreonine; by PKC.

Belongs to the interleukin-1 receptor family. The interleukin-1 receptor complex is a heterodimer of IL1R1 and IL1RAP. Interacts with PIK3R1. Interacts with IL1A. Post-translationally, a soluble form (sIL1R1) is probably produced by proteolytic cleavage at the cell surface (shedding). In terms of processing, rapidly phosphorylated on Tyr-499 in response to IL-1, which creates a SH2 binding site for the PI 3-kinase regulatory subunit PIK3R1.

It is found in the membrane. The protein resides in the cell membrane. Its subcellular location is the secreted. It catalyses the reaction NAD(+) + H2O = ADP-D-ribose + nicotinamide + H(+). Receptor for IL1A, IL1B and IL1RN. After binding to interleukin-1 associates with the coreceptor IL1RAP to form the high affinity interleukin-1 receptor complex which mediates interleukin-1-dependent activation of NF-kappa-B, MAPK and other pathways. Signaling involves the recruitment of adapter molecules such as TOLLIP, MYD88, and IRAK1 or IRAK2 via the respective TIR domains of the receptor/coreceptor subunits. Binds ligands with comparable affinity and binding of antagonist IL1RN prevents association with IL1RAP to form a signaling complex. Involved in IL1B-mediated costimulation of IFNG production from T-helper 1 (Th1) cells. The polypeptide is Interleukin-1 receptor type 1 (Il1r1) (Rattus norvegicus (Rat)).